We begin with the raw amino-acid sequence, 853 residues long: Mitochondrial 15S rRNA processing factor CCM1 (853 aa).

The N-terminal 25 residues, 1-25 (MLSLGKNGKTSSTLVRNARRSVIMP), are a transit peptide targeting the mitochondrion. 2 PPR repeats span residues 310 to 344 (NRKNYTTVISFYTKMEHYKKAWQLFDSLKFLSLEH) and 347 to 381 (DTKVYNLMLEVCQKEKNYARSLDIFQEMDDLNVTK).

This sequence belongs to the CCM1 family. Binds to mitochondrial small subunit 15S rRNA.

It localises to the mitochondrion. Regulates mitochondrial small subunit maturation by controlling 15S rRNA 5'-end processing. Localizes to the 5' precursor of the 15S rRNA in a position that is subsequently occupied by mS47 in the mature yeast mtSSU. Uses structure and sequence-specific RNA recognition, binding to a single-stranded region of the precursor and specifically recognizing bases -6 to -1. The exchange of Ccm1 for mS47 is coupled to the irreversible removal of precursor rRNA that is accompanied by conformational changes of the mitoribosomal proteins uS5m and mS26. These conformational changes signal completion of 5'-end rRNA processing through protection of the mature 5'-end of the 15S rRNA and stabilization of mS47. The removal of the 5' precursor together with the dissociation of Ccm1 may be catalyzed by the 5'-3' exoribonuclease Pet127. Involved in the specific removal of group I introns in mitochondrial encoded transcripts. The polypeptide is Mitochondrial 15S rRNA processing factor CCM1 (CCM1) (Kluyveromyces lactis (strain ATCC 8585 / CBS 2359 / DSM 70799 / NBRC 1267 / NRRL Y-1140 / WM37) (Yeast)).